A 294-amino-acid polypeptide reads, in one-letter code: Phosphonoacetaldehyde hydrolase (294 aa).

Residue aspartate 19 is the Nucleophile of the active site. Mg(2+) is bound by residues aspartate 19 and alanine 21. Lysine 60 functions as the Schiff-base intermediate with substrate in the catalytic mechanism. Residue aspartate 193 coordinates Mg(2+).

It belongs to the HAD-like hydrolase superfamily. PhnX family. As to quaternary structure, homodimer. Mg(2+) serves as cofactor.

The catalysed reaction is phosphonoacetaldehyde + H2O = acetaldehyde + phosphate + H(+). Its function is as follows. Involved in phosphonate degradation. In Hahella chejuensis (strain KCTC 2396), this protein is Phosphonoacetaldehyde hydrolase.